A 322-amino-acid chain; its full sequence is CPX chromosomal region candidate gene 1 protein homolog (322 aa).

Polar residues-rich tracts occupy residues 1-23 (MTSS…NETP) and 37-78 (TNIS…TQND). The interval 1–83 (MTSSNQGNDP…MTQNDPPDEE (83 aa)) is disordered.

The protein is CPX chromosomal region candidate gene 1 protein homolog (Cpxcr1) of Mus musculus (Mouse).